Reading from the N-terminus, the 616-residue chain is UvrABC system protein C (616 aa).

In terms of domain architecture, GIY-YIG spans 21–99; that stretch reads HQPGVYRMYD…IKLYLPKYNV (79 aa). A UVR domain is found at 209–244; the sequence is RQVIASLVEKMEQASQSLNFEQAATFRDQIQALRRV.

It belongs to the UvrC family. Interacts with UvrB in an incision complex.

The protein resides in the cytoplasm. In terms of biological role, the UvrABC repair system catalyzes the recognition and processing of DNA lesions. UvrC both incises the 5' and 3' sides of the lesion. The N-terminal half is responsible for the 3' incision and the C-terminal half is responsible for the 5' incision. The protein is UvrABC system protein C of Photobacterium profundum (strain SS9).